We begin with the raw amino-acid sequence, 255 residues long: Leucyl/phenylalanyl-tRNA--protein transferase (255 aa).

The protein belongs to the L/F-transferase family.

The protein localises to the cytoplasm. It catalyses the reaction N-terminal L-lysyl-[protein] + L-leucyl-tRNA(Leu) = N-terminal L-leucyl-L-lysyl-[protein] + tRNA(Leu) + H(+). The enzyme catalyses N-terminal L-arginyl-[protein] + L-leucyl-tRNA(Leu) = N-terminal L-leucyl-L-arginyl-[protein] + tRNA(Leu) + H(+). The catalysed reaction is L-phenylalanyl-tRNA(Phe) + an N-terminal L-alpha-aminoacyl-[protein] = an N-terminal L-phenylalanyl-L-alpha-aminoacyl-[protein] + tRNA(Phe). Its function is as follows. Functions in the N-end rule pathway of protein degradation where it conjugates Leu, Phe and, less efficiently, Met from aminoacyl-tRNAs to the N-termini of proteins containing an N-terminal arginine or lysine. This is Leucyl/phenylalanyl-tRNA--protein transferase from Burkholderia thailandensis (strain ATCC 700388 / DSM 13276 / CCUG 48851 / CIP 106301 / E264).